Here is a 75-residue protein sequence, read N- to C-terminus: Small ribosomal subunit protein eS31 (75 aa).

4 residues coordinate Zn(2+): Cys41, Cys44, Cys60, and Cys63. The C4-type zinc finger occupies 41 to 63 (CPRCGSIMAHHLKPNERWSCGKC).

It belongs to the eukaryotic ribosomal protein eS31 family. As to quaternary structure, part of the 30S ribosomal subunit. It depends on Zn(2+) as a cofactor.

This is Small ribosomal subunit protein eS31 from Saccharolobus solfataricus (strain ATCC 35092 / DSM 1617 / JCM 11322 / P2) (Sulfolobus solfataricus).